The following is a 204-amino-acid chain: MGFFITFEGIEASGKTTQINLLYDYLKSIGKNVIKTREPGGTKIGQKIREILLSKWDEKFPYIAELLLYESDRNIHIQSIVKPSLDAGYIVLSDRYIDSTTAYQHYARGIDYEIVSYLNTLATDGLKPNLTFLIDIPVEISLKRLSESKDRIESEDIEFHKKLREGFLKIAENEKGRFVVIDGTMDIMEIHKIIVDSLKQRSII.

Position 9 to 16 (9 to 16 (GIEASGKT)) interacts with ATP.

Belongs to the thymidylate kinase family.

The enzyme catalyses dTMP + ATP = dTDP + ADP. Phosphorylation of dTMP to form dTDP in both de novo and salvage pathways of dTTP synthesis. This Sulfurihydrogenibium sp. (strain YO3AOP1) protein is Thymidylate kinase.